The chain runs to 162 residues: Selenoprotein F (162 aa).

An N-terminal signal peptide occupies residues 1 to 28 (MAAGQGGWLRPALGLRLLLATAFQAVSA). Sec93 is a non-standard amino acid (selenocysteine).

The protein belongs to the selenoprotein M/F family. In terms of assembly, forms a tight complex with UGGT1/UGCGL1. Interacts with UGGT2/UGCGL2. Interacts with RDH11. In terms of tissue distribution, highest levels in prostate, lower levels in brain, lung, thyroid gland, and large intestine.

It is found in the endoplasmic reticulum lumen. Its function is as follows. May be involved in redox reactions associated with the formation of disulfide bonds. May contribute to the quality control of protein folding in the endoplasmic reticulum. May regulate protein folding by enhancing the catalytic activity of UGGT1/UGCGL1 and UGGT2/UGCGL2. This Rattus norvegicus (Rat) protein is Selenoprotein F.